We begin with the raw amino-acid sequence, 732 residues long: Elongation factor 2 (732 aa).

In terms of domain architecture, tr-type G spans 19–260; the sequence is ERIRNIGIAA…MVVRHLPSPI (242 aa). GTP-binding positions include 28–35, 94–98, and 148–151; these read AHIDHGKT, DTPGH, and NKVD. Diphthamide is present on H597.

This sequence belongs to the TRAFAC class translation factor GTPase superfamily. Classic translation factor GTPase family. EF-G/EF-2 subfamily.

Its subcellular location is the cytoplasm. Its function is as follows. Catalyzes the GTP-dependent ribosomal translocation step during translation elongation. During this step, the ribosome changes from the pre-translocational (PRE) to the post-translocational (POST) state as the newly formed A-site-bound peptidyl-tRNA and P-site-bound deacylated tRNA move to the P and E sites, respectively. Catalyzes the coordinated movement of the two tRNA molecules, the mRNA and conformational changes in the ribosome. This chain is Elongation factor 2 (fusA), found in Pyrococcus furiosus (strain ATCC 43587 / DSM 3638 / JCM 8422 / Vc1).